The primary structure comprises 18562 residues: Titin homolog (18562 aa).

The 87-residue stretch at 90–176 (PKFIQVIKAY…GVSTSYGYIT (87 aa)) folds into the Ig-like 1 domain. The disordered stretch occupies residues 384-404 (RFHPQPPKPPRAGTSRRFLPE). Ig-like domains follow at residues 406–493 (PKFV…TQVT), 821–913 (PKIV…AFIN), 943–1038 (PKFI…LTIS), and 1135–1225 (PRFE…LTVD). A disulfide bond links C842 and C897. Positions 1336–1360 (LPPVQKSMSVQEEKASSQRTPSPMN) are disordered. Positions 1679 to 1762 (PKFLRKLVNC…ASNVAGTTFS (84 aa)) constitute an Ig-like 6 domain. An intrachain disulfide couples C1700 to C1751. Coiled-coil stretches lie at residues 1766–1786 (LKLS…SEIK), 2011–2038 (QSLD…ERTS), and 2065–2085 (ISDQ…ALQE). A disordered region spans residues 2155 to 2177 (RKGSDKDKRKATRIKRVPSAHSA). Positions 2163-2172 (RKATRIKRVP) are enriched in basic residues. Positions 2205–2231 (LKQNEEAKEIQELFVKIEKEINTIAEL) form a coiled coil. 2 disordered regions span residues 2298–2459 (IIGI…TADA) and 2614–2637 (KSSL…EVTA). Residues 2309–2323 (RRPSSTPRGSTRSSN) are compositionally biased toward low complexity. The span at 2324-2341 (LTTSQDSQATTKMTVSSE) shows a compositional bias: polar residues. Positions 2606–2630 (LMQTLASEKSSLKAAEEDEKEGEEE) form a coiled coil. Acidic residues predominate over residues 2621 to 2636 (EEDEKEGEEEGEEEVT). Ig-like domains lie at 3095 to 3177 (KEVM…SGLY) and 3179 to 3264 (TERS…SFVS). The tract at residues 3362 to 3692 (EVPKVAEPSE…NAEAQKVVDS (331 aa)) is disordered. Acidic residues predominate over residues 3655 to 3665 (SEEETPLEETN). Ig-like domains are found at residues 3789–3878 (PVFT…CEIV), 3897–3985 (PHFV…CTID), and 4038–4125 (PPYF…CVLT). 2 disulfides stabilise this stretch: C3919–C3969 and C4059–C4109. 14 disordered regions span residues 4553-4599 (QSRE…SAPT), 4634-4699 (TVEP…EIVE), 4750-4814 (GSTA…TSEV), 4826-4855 (PVPE…EVQP), 4912-4931 (STAA…VESK), 4950-4969 (PETS…PVES), 4989-5216 (PETS…EILE), 5267-5294 (GSTA…EVEP), 5306-5325 (PETS…SVES), 5345-5372 (PETS…EVEP), 5428-6101 (GSTA…VEPT), 6127-6157 (VQVP…EVQP), 6214-6900 (STAA…ETSE), and 6930-8453 (APVE…DDKL). The span at 4555-4577 (RELDNTERNFTVNKEKDESKKPS) shows a compositional bias: basic and acidic residues. PVET repeat units follow at residues 4599–4626 (TVEK…KDVP), 4627–4665 (VPET…KDVP), 4666–4704 (VPET…KDVT), 4755–4787 (PAQE…KDVP), 4788–4826 (VPET…KDVP), 4827–4865 (VPET…KDVT), 4917–4948 (AQEP…KDVP), 4949–4987 (VPET…KDVP), 4988–5026 (VPET…KDVP), 5027–5065 (VPET…KDVP), 5066–5104 (VPET…KDVP), 5105–5143 (VPET…KDVP), 5144–5182 (VPET…KVVP), 5183–5221 (VPET…KDVT), 5273–5304 (AQEP…KDVP), 5305–5343 (VPET…KDVP), 5344–5382 (VPET…KDVT), 5434–5465 (AQEP…KDVP), 5466–5504 (VPET…KDVP), 5505–5543 (VPET…KVVP), 5544–5582 (VPET…KDVP), 5583–5621 (VPET…KDVP), 5622–5660 (VPET…KDVS), 5661–5699 (VPET…KDVS), 5700–5738 (VPET…KDVP), 5739–5777 (VPET…KDVQ), 5778–5816 (VPET…KDVP), 5817–5855 (VPET…KDVP), 5856–5894 (VPET…KDVS), 5895–5933 (VPET…KDVP), 5934–5972 (VPET…KDVQ), 5973–6011 (VPET…KDVP), 6012–6050 (VPET…KDVQ), 6051–6089 (VPET…KDVS), 6090–6128 (VPET…KDVQ), 6129–6167 (VPET…KDVT), 6219–6250 (AHEP…KDVP), 6251–6289 (VPET…KDLP), 6290–6328 (VPET…KDVP), 6329–6367 (VPET…KDVP), 6368–6406 (VPET…KDVP), 6407–6445 (VPET…KDVS), 6446–6484 (VPET…KDVS), 6485–6523 (VPET…KDVP), 6524–6562 (VPET…KDVQ), 6563–6601 (VPET…KDVP), 6602–6640 (VPET…KDVP), 6641–6679 (VPET…KDVQ), 6680–6718 (VPET…KDVP), 6719–6757 (VPET…KDVA), 6758–6796 (VPET…KDVP), 6797–6835 (VPET…KDVP), 6836–6874 (VPET…KDVP), 6875–6913 (VPET…KDVP), 6914–6952 (VPEA…KDVP), and 6953–6991 (VPEA…KLKK). Basic and acidic residues-rich tracts occupy residues 4638–4651 (TVEK…KETS) and 4677–4691 (TVEK…EKSE). Over residues 4960–4969 (TVEKLKPVES) the composition is skewed to basic and acidic residues. Residues 5038 to 5051 (TVEKLKPVESKETS) show a composition bias toward basic and acidic residues. Composition is skewed to basic and acidic residues over residues 5116–5129 (TVEK…KETS) and 5155–5168 (TVEK…KETS). Residues 5212-5235 (AEILEQKDVTCEEEIKELLTEVEV) adopt a coiled-coil conformation. The span at 5316–5325 (TVEKLKSVES) shows a compositional bias: basic and acidic residues. 2 stretches are compositionally biased toward basic and acidic residues: residues 5477 to 5490 (TVEK…KETS) and 5516 to 5529 (TVEK…KETS). Basic and acidic residues-rich tracts occupy residues 6690–6704 (PTKE…KETS), 6729–6743 (PTKE…KETS), 6768–6782 (PTKE…KETS), 6807–6821 (PTKE…KETS), 6846–6860 (PTKE…KETS), and 6885–6899 (PTKE…KETS). Basic and acidic residues-rich tracts occupy residues 6972–7606 (ESKE…DNFK), 7613–7630 (LQKE…DNFK), 7637–8062 (LQKE…DNFK), and 8069–8453 (LQKE…DDKL). Residues 6984-7812 (QADAKLKKEK…DKLKQETDAK (829 aa)) adopt a coiled-coil conformation. BLUE repeat units lie at residues 6992 to 6996 (EKDDK), 6997 to 7012 (HKQE…NDDK), 7013 to 7028 (LKQE…NDDK), 7029 to 7044 (LKQE…NDDK), 7045 to 7060 (LKQE…NDDK), 7061 to 7076 (LKQE…NDDK), 7077 to 7092 (LKQE…NDDK), 7093 to 7108 (LKQE…NDDK), 7109 to 7124 (LKQE…NDDK), 7125 to 7140 (LKQE…NDDK), 7141 to 7156 (LKQE…NDDK), 7157 to 7172 (LKQE…NDDK), 7173 to 7188 (LKQE…NDDK), 7189 to 7204 (LKQE…KHDK), 7205 to 7220 (LKQE…NDDK), 7221 to 7236 (LKQE…NDDK), 7237 to 7252 (LKQE…KDDK), 7253 to 7268 (LKQE…KDDK), 7269 to 7284 (LKQD…KDDK), 7285 to 7300 (LKQE…KDDK), 7301 to 7316 (LKHE…KDDK), 7317 to 7332 (LKQE…KDDR), 7333 to 7348 (LKKD…KDDK), 7349 to 7364 (LKQE…KDDK), 7365 to 7380 (LKHE…KDDK), 7381 to 7396 (LKQE…KDDK), 7397 to 7412 (LKQE…KDDK), 7413 to 7428 (LKQE…KDDK), 7429 to 7444 (LKQE…KDDK), 7445 to 7460 (LKQE…KDDK), 7461 to 7476 (LKQE…KDDK), 7477 to 7492 (LKQE…KDDK), 7493 to 7508 (LKQE…KDDK), 7509 to 7524 (LKQD…KDDK), 7525 to 7540 (LKQE…KDDK), 7541 to 7556 (LKHE…KDDK), 7557 to 7572 (LKQE…KDDK), 7573 to 7588 (LKQD…KDDK), 7589 to 7604 (LKHE…KDDN), 7605 to 7620 (FKQE…KDDK), 7621 to 7628 (LKQEKDDN), 7629 to 7644 (FKQE…KDDK), 7645 to 7652 (LKQEKDDK), 7653 to 7668 (LKQE…KDDK), 7669 to 7684 (LKQE…KDDK), 7685 to 7700 (LKQE…KDDK), 7701 to 7716 (LKQE…KDDK), 7717 to 7732 (LKQE…KDDK), 7733 to 7748 (LKQE…KDDK), 7749 to 7764 (LKQE…KDDK), 7765 to 7772 (LKQEKNDK), 7773 to 7788 (LKQE…KDDK), 7789 to 7804 (LKQE…KDDK), 7805 to 7820 (LKQE…KDDK), 7821 to 7836 (LKQE…KDDK), 7837 to 7852 (LKQE…KDDK), 7853 to 7868 (LKQE…KDNK), 7869 to 7884 (LKQE…KDNK), 7885 to 7900 (LKQE…KDDK), 7901 to 7916 (LKQE…KDDK), 7917 to 7932 (LKQE…KDDK), 7933 to 7948 (LKQE…KDDK), 7949 to 7964 (LKQE…KDDK), 7965 to 7980 (LKQE…KDDK), 7981 to 7996 (LKQE…KDDK), 7997 to 8012 (LKQE…KDDK), 8013 to 8028 (LKQE…KDDK), 8029 to 8044 (LKQE…KDDK), 8045 to 8060 (LKQE…KDDN), 8061 to 8076 (FKQE…KDDK), 8077 to 8084 (LKQEKDDK), 8085 to 8100 (LKQE…KDDK), 8101 to 8116 (LKQE…KDDK), 8117 to 8132 (LKQE…KDDK), 8133 to 8148 (LKQE…KDDK), 8149 to 8164 (LKQE…KDDK), 8165 to 8180 (LKQE…KDDK), 8181 to 8196 (LKQE…KDDK), 8197 to 8212 (LKQE…KDDK), 8213 to 8228 (LKQE…KDDK), 8229 to 8244 (LKQE…KDDK), 8245 to 8260 (LKQE…KDDK), 8261 to 8276 (LKQE…KDDK), 8277 to 8292 (LKQE…KDDK), 8293 to 8308 (LKQE…KDNK), 8309 to 8324 (LKQE…KDNK), 8325 to 8340 (LKQE…KDDK), 8341 to 8356 (LKQE…KDDK), 8357 to 8371 (LKQE…EKDD), 8373 to 8388 (LKQE…KDDK), 8389 to 8404 (LKQE…KDDK), 8405 to 8420 (LKQE…KDDK), 8421 to 8436 (LKQE…KDDK), 8437 to 8452 (LKQE…KDDK), 8453 to 8468 (LKQE…KDDK), and 8469 to 8484 (LKQE…KGDK). Positions 7876-8273 (KLKKEKDNKL…EADAKLKKDK (398 aa)) form a coiled coil. The stretch at 8316–8490 (KLKKEKDNKL…KGDKLKLEDQ (175 aa)) forms a coiled coil. A compositionally biased stretch (basic residues) spans 8599–8611 (KHLKKKKKHHKKE). The disordered stretch occupies residues 8599 to 8626 (KHLKKKKKHHKKEKIAVKETEQDEKTVS). Basic and acidic residues predominate over residues 8612-8626 (KIAVKETEQDEKTVS). Positions 8950–9041 (KPRKAQLVAL…EIIEVNTLDY (92 aa)) constitute a Fibronectin type-III 1 domain. Disordered regions lie at residues 9079–9104 (IEEH…LDSE), 9147–9436 (VQKI…AAAE), 9481–9609 (EEQS…ETES), 9702–10224 (ADAV…ESRI), 10239–10274 (ESDD…EDSP), 10539–11018 (QSAP…DSFT), 11030–11111 (EDAV…QKDQ), 11123–11213 (KKLA…QDKT), 11225–11387 (AKTT…SLTS), 11420–11592 (KGLN…NPEL), 11624–11825 (LTKK…SDNL), 11872–11955 (LSAH…TSLS), 11996–12054 (TNLI…LQKN), 12397–12418 (GRRV…RKKR), 12537–12974 (EESR…PAES), 13026–13045 (EAAK…TEVV), 13065–13261 (AAEA…LNDK), 13283–13514 (QAQA…EQLK), 13553–13574 (EEKQ…KLKL), and 13594–13874 (EKLA…RRTG). Over residues 9084-9093 (KLKKKSKKSK) the composition is skewed to basic residues. Basic and acidic residues-rich tracts occupy residues 9172 to 9184 (VKKD…KKSL) and 9191 to 9202 (TKKEIQGKPEKK). A compositionally biased stretch (polar residues) spans 9213-9231 (SSISETSETLTKDLTQTKQ). Basic and acidic residues predominate over residues 9232–9267 (SEPEPAKRTTETSVQDEVKRKTETTSKSKQTTEEHP). Residues 9273-9283 (SDSSISSTSDA) are compositionally biased toward low complexity. Over residues 9295–9332 (EAQKVTEKPETAKLESKSKMTEDTTKESDNKETVDEKP) the composition is skewed to basic and acidic residues. The span at 9346-9359 (STISETSETSAVES) shows a compositional bias: low complexity. Residues 9371 to 9510 (AAVDKEKKQK…QTKAKAAEKQ (140 aa)) adopt a coiled-coil conformation. Composition is skewed to basic and acidic residues over residues 9373-9436 (VDKE…AAAE) and 9481-9521 (EEQS…KSNK). Over residues 9547–9558 (SSISQKSDTSKT) the composition is skewed to low complexity. The stretch at 9577–9749 (TSKQKETDKK…QTVEEQAKLD (173 aa)) forms a coiled coil. 2 stretches are compositionally biased toward basic and acidic residues: residues 9578–9609 (SKQK…ETES) and 9702–9783 (ADAV…DEKP). The segment covering 9798–9809 (SISQKSVTSKTV) has biased composition (polar residues). Basic and acidic residues-rich tracts occupy residues 9819–10004 (ETQK…DEKP), 10040–10149 (ETQK…KSEN), and 10162–10196 (VKSE…EPKE). Coiled coils occupy residues 9822–9995 (KVAD…TEEA) and 10046–10129 (EADK…TSKK). Residues 10197–10206 (KKKIIKKKKD) are compositionally biased toward basic residues. Over residues 10207–10224 (TTKPQEASKELSSDESRI) the composition is skewed to basic and acidic residues. Polar residues predominate over residues 10239-10250 (ESDDLSTASTIK). In terms of domain architecture, Fibronectin type-III 2 spans 10461–10553 (KPTSLQVTST…DTIEATTQAE (93 aa)). Basic and acidic residues predominate over residues 10566–10609 (EKVKEPVSKKPENTKESEGHKKRDRKESEDHDENNLGKSGKDEF). Residues 10612-10637 (SGESGTSNQNEESAQLNTSFTSTEQH) show a composition bias toward polar residues. The span at 10663–10680 (IDADVVEVEYDEQGDDIP) shows a compositional bias: acidic residues. A compositionally biased stretch (basic and acidic residues) spans 10707 to 10716 (MAEKDSDAME). Polar residues predominate over residues 10779–10790 (ADQTGMSIQDLN). Composition is skewed to basic and acidic residues over residues 10840 to 10852 (QLDK…DDKM) and 10863 to 10884 (KKPE…KESD). Polar residues predominate over residues 10961 to 10975 (LSTSEQVENASQNLG). Basic and acidic residues-rich tracts occupy residues 10999-11009 (IHGEAESKLGE), 11045-11055 (SAEKTSLEVRD), and 11076-11089 (SNRD…RDLN). The stretch at 11018 to 11064 (TLQDLYEELKAKEDAVEAGAETSNADQSAEKTSLEVRDMKKKMKKKQ) forms a coiled coil. The span at 11090–11108 (TQHSNQTGEDESSTFNFGQ) shows a compositional bias: polar residues. Residues 11159-11173 (KKGEENEKTKFEAKH) are compositionally biased toward basic and acidic residues. Residues 11174 to 11187 (LGSSSASDSLAEST) are compositionally biased toward low complexity. 3 stretches are compositionally biased toward basic and acidic residues: residues 11195–11211 (KGEV…KNQD), 11271–11280 (IPDKNRDSDK), and 11295–11318 (ESAE…EKTL). The segment covering 11374–11387 (SKVTTSFADESLTS) has biased composition (polar residues). Basic and acidic residues-rich tracts occupy residues 11440–11464 (KVKD…KDQK) and 11472–11485 (GSKD…EEKT). Polar residues predominate over residues 11503-11515 (MTDQKNVQESQYA). Composition is skewed to basic and acidic residues over residues 11624 to 11635 (LTKKQDENDAKK), 11645 to 11669 (AKKD…DSRE), and 11722 to 11735 (VSEK…EKTV). A compositionally biased stretch (polar residues) spans 11754 to 11767 (ESLNASSALSTTDV). The span at 11916 to 11937 (AEDKYVESRKKTTLKKKPEQKQ) shows a compositional bias: basic and acidic residues. A coiled-coil region spans residues 12408-12428 (ELDDAKKRKKRRIKRVVERRN). The Ig-like 12 domain occupies 12432 to 12547 (PRLTQLIPPR…ESRDDDKSVD (116 aa)). Composition is skewed to basic and acidic residues over residues 12537–12547 (EESRDDDKSVD), 12555–12567 (LEEK…DKSK), and 12609–12689 (VGAK…KKDA). A compositionally biased stretch (low complexity) spans 12690–12701 (SQPSSSKESSPP). Residues 12729 to 12740 (TMHSETNITTTI) show a composition bias toward polar residues. 3 stretches are compositionally biased toward basic and acidic residues: residues 12766 to 12839 (ESAK…KNKS), 12852 to 12865 (ETKK…EVPK), and 12889 to 12940 (PADD…DDKS). Residues 12797-12828 (KKSEKKDEVTAEKQSTEALIESKKKEVDESKI) are a coiled coil. Residues 12980-13103 (AEVNKAKKQK…LKLEEESAAK (124 aa)) adopt a coiled-coil conformation. Basic and acidic residues-rich tracts occupy residues 13065-13124 (AAEA…KAGE), 13133-13145 (PTSK…KDVG), 13176-13191 (TDSE…DEPT), 13203-13261 (EADK…LNDK), 13283-13327 (QAQA…EKQA), 13337-13354 (AVKK…EANK), and 13361-13416 (LKIE…DEKP). Positions 13237-13380 (LDAQEKIKKV…SKQTVEEQAK (144 aa)) form a coiled coil. A compositionally biased stretch (polar residues) spans 13431-13442 (SISQKSETSKTV). Residues 13452–13514 (ETQKVADAAR…KQKEKDEQLK (63 aa)) are compositionally biased toward basic and acidic residues. A coiled-coil region spans residues 13455–13628 (KVADAARKQK…ETKSKQTEEA (174 aa)). Residues 13594–13637 (EKLAQEQSRLEDEAKKSAEKQKLESETKSKQTEEAPKESVDEKP) show a composition bias toward basic and acidic residues. The span at 13651-13662 (SSISQKSKSAKS) shows a compositional bias: low complexity. Residues 13684-13696 (KVEQSPDESTSAT) show a composition bias toward polar residues. Basic and acidic residues predominate over residues 13697 to 13735 (IKRDPAQKTEEISKQDDGDEKKTTTDGKPPKPEDSEATP). A compositionally biased stretch (low complexity) spans 13747–13760 (SDSVASDASLADVS). Over residues 13761 to 13770 (KLSDDVEEKP) the composition is skewed to basic and acidic residues. Residues 13784 to 13793 (SVISETSSVD) are compositionally biased toward polar residues. Basic and acidic residues-rich tracts occupy residues 13795–13808 (IKPE…EKAE) and 13824–13843 (SEPK…DMMT). In terms of domain architecture, Ig-like 13 spans 13963–14036 (PVDFVKYLPR…RAKYEDSGKY (74 aa)). Fibronectin type-III domains are found at residues 14153–14247 (APGD…TGSP), 14253–14348 (VEFP…TVEG), and 14350–14448 (VPEI…VLAD). 3 consecutive Ig-like domains span residues 14451 to 14542 (PRVL…VGIS), 14550 to 14634 (SSFS…VIVN), and 14638 to 14727 (PHIL…LVFE). C14568 and C14618 are joined by a disulfide. 2 Fibronectin type-III domains span residues 14826-14920 (APCD…TLES) and 14937-15027 (ILRT…LVPG). Residues 15011 to 15180 (VSSPSEETNP…TGKETTEKKK (170 aa)) form a disordered region. Basic and acidic residues-rich tracts occupy residues 15034-15060 (KTEK…EKQV) and 15085-15117 (KVAE…ESRR). Positions 15118–15132 (GSLQASSDNESVTTT) are enriched in polar residues. Residues 15133–15177 (SEKRSEAELEKNSEKSAEKKSTSADLEAADKAETEKSETGKETTE) are compositionally biased toward basic and acidic residues. Ig-like domains follow at residues 15180 to 15274 (KKVV…VSIA) and 15283 to 15371 (PKVE…IALR). 2 Fibronectin type-III domains span residues 15383–15475 (PTGP…LKKK) and 15503–15596 (QIGK…TTES). Positions 15470-15503 (TTLKKKEETGKQKSEKSESDEKKSESDKVSELKQ) are disordered. Residues 15473–15503 (KKKEETGKQKSEKSESDEKKSESDKVSELKQ) are compositionally biased toward basic and acidic residues. 2 Ig-like domains span residues 15599–15687 (PAFT…CKLT) and 15692–15786 (PEIN…IQVT). A Fibronectin type-III 10 domain is found at 15791–15883 (APGKPAVEDQ…DESELVVVKN (93 aa)). The region spanning 15934 to 16189 (YIIHEELGKG…VQDALRHPWI (256 aa)) is the Protein kinase domain. ATP is bound by residues 15940–15948 (LGKGAYGTV) and K15963. D16055 functions as the Proton acceptor in the catalytic mechanism. The interval 16206–16264 (KMQPKLDKSGVPARQKRNFLSLKRWSDDLLPIGRLAKRGAIFRRLTMDGVFERNIAFDT) is autoinhibitory domain. Ig-like domains follow at residues 16268–16358 (PSVK…AKLS), 16500–16575 (GKQL…VAKN), 16605–16692 (PRFR…FSVV), and 16705–16789 (PKFL…KDFT). 4 disulfide bridges follow: C16290-C16342, C16508-C16571, C16627-C16677, and C16726-C16778. Residues 16805–16827 (LTPVRSRSRSRSRSPSVVGGEIQ) form a disordered region. 3 consecutive Ig-like domains span residues 16829-16918 (PPVV…AIVV), 16932-17025 (PTFV…LTIS), and 17037-17126 (PYFI…TEVS). A disordered region spans residues 17121–17169 (QNTEVSVTKSKEVKEKKEKKKVEKKDEGKKKPGRPGLPRPSGASKTEQV). Residues 17129-17150 (KSKEVKEKKEKKKVEKKDEGKK) show a composition bias toward basic and acidic residues. In terms of domain architecture, Fibronectin type-III 11 spans 17154-17245 (RPGLPRPSGA…MTSTLKTASV (92 aa)). 11 consecutive Ig-like domains span residues 17249–17336 (PQFT…CQVT), 17358–17447 (PTLQ…CNVA), 17457–17548 (PSFS…VMIA), 17570–17661 (PRFT…TQVI), 17676–17765 (PKFT…QATT), 17782–17873 (PRFV…LNVS), 18008–18097 (PKFM…SEID), 18121–18213 (PNFI…LQVS), 18224–18316 (PPLF…MQLD), 18329–18417 (PRVF…LELT), and 18429–18519 (PKFN…MILS). Intrachain disulfides connect C17379-C17431 and C17478-C17530. C17697 and C17754 are oxidised to a cystine. The cysteines at positions 18143 and 18195 are disulfide-linked.

The protein belongs to the protein kinase superfamily. CAMK Ser/Thr protein kinase family. As to quaternary structure, interacts (via C-terminus) with myosin. Interacts with actin. Requires Mg(2+) as cofactor. As to expression, expression is restricted to body wall, enteric and vulval muscles.

It is found in the cytoplasm. It localises to the myofibril. The protein resides in the sarcomere. The protein localises to the a band. Its subcellular location is the i band. It is found in the nucleus membrane. The catalysed reaction is L-seryl-[protein] + ATP = O-phospho-L-seryl-[protein] + ADP + H(+). It carries out the reaction L-threonyl-[protein] + ATP = O-phospho-L-threonyl-[protein] + ADP + H(+). Its function is as follows. Serine/threonine-protein kinase. Key component in the assembly and functioning of muscles. By providing connections at the level of individual microfilaments, it contributes to the fine balance of forces between the two halves of the sarcomere. The size and extensibility of the cross-links are the main determinants of sarcomere extensibility properties of muscle. In non-muscle cells, seems to play a role in chromosome condensation and chromosome segregation during mitosis. Might link the lamina network to chromatin or nuclear actin, or both during interphase. In Caenorhabditis elegans, this protein is Titin homolog.